Reading from the N-terminus, the 338-residue chain is 1-aminocyclopropane-1-carboxylate deaminase (338 aa).

At K51 the chain carries N6-(pyridoxal phosphate)lysine. Catalysis depends on S78, which acts as the Nucleophile.

The protein belongs to the ACC deaminase/D-cysteine desulfhydrase family. Homotrimer. Pyridoxal 5'-phosphate serves as cofactor.

The enzyme catalyses 1-aminocyclopropane-1-carboxylate + H2O = 2-oxobutanoate + NH4(+). Its function is as follows. Catalyzes a cyclopropane ring-opening reaction, the irreversible conversion of 1-aminocyclopropane-1-carboxylate (ACC) to ammonia and alpha-ketobutyrate. Allows growth on ACC as a nitrogen source. In Burkholderia lata (strain ATCC 17760 / DSM 23089 / LMG 22485 / NCIMB 9086 / R18194 / 383), this protein is 1-aminocyclopropane-1-carboxylate deaminase.